A 416-amino-acid polypeptide reads, in one-letter code: Adenylosuccinate synthetase (416 aa).

GTP contacts are provided by residues 12–18 (GDEGKGK) and 40–42 (GHT). The active-site Proton acceptor is aspartate 13. 2 residues coordinate Mg(2+): aspartate 13 and glycine 40. Residues 13 to 16 (DEGK), 38 to 41 (NAGH), threonine 125, arginine 139, glutamine 219, threonine 234, and arginine 298 each bind IMP. Histidine 41 functions as the Proton donor in the catalytic mechanism. 294–300 (TVTGRKR) is a substrate binding site. GTP contacts are provided by residues arginine 300, 326–328 (KLD), and 404–406 (STS).

Belongs to the adenylosuccinate synthetase family. As to quaternary structure, homodimer. The cofactor is Mg(2+).

It localises to the cytoplasm. The catalysed reaction is IMP + L-aspartate + GTP = N(6)-(1,2-dicarboxyethyl)-AMP + GDP + phosphate + 2 H(+). The protein operates within purine metabolism; AMP biosynthesis via de novo pathway; AMP from IMP: step 1/2. Plays an important role in the de novo pathway of purine nucleotide biosynthesis. Catalyzes the first committed step in the biosynthesis of AMP from IMP. In Aliarcobacter butzleri (strain RM4018) (Arcobacter butzleri), this protein is Adenylosuccinate synthetase.